A 243-amino-acid chain; its full sequence is NAD(P)H-quinone oxidoreductase subunit K, chloroplastic (243 aa).

C65, C66, C130, and C161 together coordinate [4Fe-4S] cluster.

The protein belongs to the complex I 20 kDa subunit family. As to quaternary structure, NDH is composed of at least 16 different subunits, 5 of which are encoded in the nucleus. [4Fe-4S] cluster is required as a cofactor.

It localises to the plastid. The protein resides in the chloroplast thylakoid membrane. The enzyme catalyses a plastoquinone + NADH + (n+1) H(+)(in) = a plastoquinol + NAD(+) + n H(+)(out). The catalysed reaction is a plastoquinone + NADPH + (n+1) H(+)(in) = a plastoquinol + NADP(+) + n H(+)(out). In terms of biological role, NDH shuttles electrons from NAD(P)H:plastoquinone, via FMN and iron-sulfur (Fe-S) centers, to quinones in the photosynthetic chain and possibly in a chloroplast respiratory chain. The immediate electron acceptor for the enzyme in this species is believed to be plastoquinone. Couples the redox reaction to proton translocation, and thus conserves the redox energy in a proton gradient. In Marchantia polymorpha (Common liverwort), this protein is NAD(P)H-quinone oxidoreductase subunit K, chloroplastic.